The primary structure comprises 697 residues: Heat shock protein homolog SSE1 (697 aa).

Low complexity predominate over residues 664–674; it reads EMAEKLAAQRA. The interval 664-697 is disordered; it reads EMAEKLAAQRAAEQKAQESKAESDKDAEGDIDLD. Residues 675–691 show a composition bias toward basic and acidic residues; it reads AEQKAQESKAESDKDAE.

The protein belongs to the heat shock protein 70 family.

It is found in the cytoplasm. The chain is Heat shock protein homolog SSE1 (SSE1) from Eremothecium gossypii (strain ATCC 10895 / CBS 109.51 / FGSC 9923 / NRRL Y-1056) (Yeast).